A 420-amino-acid chain; its full sequence is Dynein axonemal assembly factor 4 (420 aa).

Positions 3–87 (LQVSDYSWQQ…KEAAMWETLS (85 aa)) constitute a CS domain. The mediates interaction with ESR1 and STUB1 stretch occupies residues 7 to 103 (DYSWQQTKTA…EMMQRIREKS (97 aa)). TPR repeat units lie at residues 290–323 (PEWL…NNKM), 324–357 (PLLY…LMPP), and 366–399 (MKAH…DPSN).

In terms of assembly, interacts with ZMYND10. Interacts with STUB1. Interacts with ESR1 and ESR2. Interacts with DNAAF2. Interacts with CCT3, CCT4, CCT5 and CCT8. Interacts with DNAAF6/PIH1D3.

Its subcellular location is the nucleus. The protein localises to the cytoplasm. It is found in the cell projection. The protein resides in the neuron projection. It localises to the dynein axonemal particle. Involved in neuronal migration during development of the cerebral neocortex. May regulate the stability and proteasomal degradation of the estrogen receptors that play an important role in neuronal differentiation, survival and plasticity. Axonemal dynein assembly factor required for ciliary motility. The sequence is that of Dynein axonemal assembly factor 4 from Pan paniscus (Pygmy chimpanzee).